Consider the following 102-residue polypeptide: Biotrophy-associated secreted protein 4 (102 aa).

The N-terminal stretch at 1 to 21 is a signal peptide; the sequence is MQLSFSAIAILLAFAVNHATA. Asn-36 is a glycosylation site (N-linked (GlcNAc...) asparagine).

It localises to the secreted. Its function is as follows. Secreted effector involved in biotrophic colonization of plant cells. Participates in transition from the biotrophic to the necrotrophic phase of Magnaporthe oryzae. Elicits rice basic defense responses during the early stage of interaction and promotes cell death in the late stage of compatible interaction. This is Biotrophy-associated secreted protein 4 from Pyricularia oryzae (strain 70-15 / ATCC MYA-4617 / FGSC 8958) (Rice blast fungus).